A 443-amino-acid chain; its full sequence is tRNA modification GTPase MnmE (443 aa).

(6S)-5-formyl-5,6,7,8-tetrahydrofolate-binding residues include Arg-23, Glu-80, and Lys-120. The TrmE-type G domain maps to 217–367 (GFEVVILGAP…LLAEIGRRAA (151 aa)). Residues 227 to 232 (NAGKSS), 246 to 252 (TDEPGTT), and 271 to 274 (DTAG) each bind GTP. Ser-231 and Thr-252 together coordinate Mg(2+). Lys-443 lines the (6S)-5-formyl-5,6,7,8-tetrahydrofolate pocket.

This sequence belongs to the TRAFAC class TrmE-Era-EngA-EngB-Septin-like GTPase superfamily. TrmE GTPase family. Homodimer. Heterotetramer of two MnmE and two MnmG subunits. It depends on K(+) as a cofactor.

It localises to the cytoplasm. Functionally, exhibits a very high intrinsic GTPase hydrolysis rate. Involved in the addition of a carboxymethylaminomethyl (cmnm) group at the wobble position (U34) of certain tRNAs, forming tRNA-cmnm(5)s(2)U34. In Mesorhizobium japonicum (strain LMG 29417 / CECT 9101 / MAFF 303099) (Mesorhizobium loti (strain MAFF 303099)), this protein is tRNA modification GTPase MnmE.